Reading from the N-terminus, the 431-residue chain is Enolase (431 aa).

A (2R)-2-phosphoglycerate-binding site is contributed by Gln167. Residue Glu209 is the Proton donor of the active site. Asp246, Glu290, and Asp317 together coordinate Mg(2+). Positions 342, 371, 372, and 393 each coordinate (2R)-2-phosphoglycerate. Lys342 acts as the Proton acceptor in catalysis.

Belongs to the enolase family. As to quaternary structure, component of the RNA degradosome, a multiprotein complex involved in RNA processing and mRNA degradation. Mg(2+) is required as a cofactor.

It is found in the cytoplasm. The protein resides in the secreted. It localises to the cell surface. It catalyses the reaction (2R)-2-phosphoglycerate = phosphoenolpyruvate + H2O. It participates in carbohydrate degradation; glycolysis; pyruvate from D-glyceraldehyde 3-phosphate: step 4/5. Its function is as follows. Catalyzes the reversible conversion of 2-phosphoglycerate (2-PG) into phosphoenolpyruvate (PEP). It is essential for the degradation of carbohydrates via glycolysis. In Yersinia enterocolitica serotype O:8 / biotype 1B (strain NCTC 13174 / 8081), this protein is Enolase.